The following is a 154-amino-acid chain: Nascent polypeptide-associated complex subunit beta (154 aa).

The 66-residue stretch at 34–99 folds into the NAC-A/B domain; sequence EQDDTKLIEA…PQEKDVTQLI (66 aa). Residues 125-154 form a disordered region; sequence KNPELNAGGAEGAEEDIPDLIEGQKFDDVE.

This sequence belongs to the NAC-beta family. In terms of assembly, part of the nascent polypeptide-associated complex (NAC), consisting of EGD2 and EGD1. NAC associates with ribosomes via EGD1.

It localises to the cytoplasm. The protein localises to the nucleus. Component of the nascent polypeptide-associated complex (NAC), a dynamic component of the ribosomal exit tunnel, protecting the emerging polypeptides from interaction with other cytoplasmic proteins to ensure appropriate nascent protein targeting. The NAC complex also promotes mitochondrial protein import by enhancing productive ribosome interactions with the outer mitochondrial membrane and blocks the inappropriate interaction of ribosomes translating non-secretory nascent polypeptides with translocation sites in the membrane of the endoplasmic reticulum. EGD1 may act as a transcription factor that exert a negative effect on the expression of several genes that are transcribed by RNA polymerase II. This chain is Nascent polypeptide-associated complex subunit beta (EGD1), found in Debaryomyces hansenii (strain ATCC 36239 / CBS 767 / BCRC 21394 / JCM 1990 / NBRC 0083 / IGC 2968) (Yeast).